The following is a 965-amino-acid chain: UvrABC system protein A (965 aa).

Residue 32–39 coordinates ATP; it reads GLSGSGKS. The segment at 254–281 adopts a C4-type zinc-finger fold; that stretch reads CPVCDYSLPELEPRLFSFNAPMGACPAC. 2 ABC transporter domains span residues 311 to 588 and 608 to 937; these read WDRR…PRSL and PNAT…HFLA. Residue 641 to 648 coordinates ATP; it reads GVSGSGKS. The segment at 740–766 adopts a C4-type zinc-finger fold; it reads CEACEGDGLIKVEMHFLPDVYVPCDVC.

It belongs to the ABC transporter superfamily. UvrA family. In terms of assembly, forms a heterotetramer with UvrB during the search for lesions.

The protein localises to the cytoplasm. Functionally, the UvrABC repair system catalyzes the recognition and processing of DNA lesions. UvrA is an ATPase and a DNA-binding protein. A damage recognition complex composed of 2 UvrA and 2 UvrB subunits scans DNA for abnormalities. When the presence of a lesion has been verified by UvrB, the UvrA molecules dissociate. This is UvrABC system protein A from Xylella fastidiosa (strain 9a5c).